Reading from the N-terminus, the 582-residue chain is Membrane protein insertase YidC (582 aa).

Helical transmembrane passes span 4–24, 376–396, 446–466, and 542–562; these read NTVL…YIQQ, IIPN…IIFF, ASGC…FGLF, and FMPL…LLFW.

It belongs to the OXA1/ALB3/YidC family. Type 1 subfamily. In terms of assembly, interacts with the Sec translocase complex via SecD. Specifically interacts with transmembrane segments of nascent integral membrane proteins during membrane integration.

It localises to the cell inner membrane. Required for the insertion and/or proper folding and/or complex formation of integral membrane proteins into the membrane. Involved in integration of membrane proteins that insert both dependently and independently of the Sec translocase complex, as well as at least some lipoproteins. Aids folding of multispanning membrane proteins. The sequence is that of Membrane protein insertase YidC from Treponema denticola (strain ATCC 35405 / DSM 14222 / CIP 103919 / JCM 8153 / KCTC 15104).